A 174-amino-acid chain; its full sequence is DNA replication inhibitor plutonium (174 aa).

2 ANK repeats span residues 39–68 (YGNTALLKACYLGRFECARTLLEFGANIFA) and 72–103 (FGQNALTLATYAGHLTLVKELLRRRSYKDFNL). A Phosphothreonine modification is found at Thr-167.

In terms of biological role, inhibits DNA replication early in developments. May bind and block the action of a replication or initiation factor. The chain is DNA replication inhibitor plutonium (plu) from Drosophila melanogaster (Fruit fly).